The following is a 437-amino-acid chain: GTPase Der (437 aa).

2 consecutive EngA-type G domains span residues 3–168 (PLIA…PETE) and 178–353 (IQLA…QNRS). Residues 9–16 (GRPNVGKS), 56–60 (DTGGY), 120–123 (NKVE), 184–191 (GRPNVGKS), 231–235 (DTAGL), and 296–299 (NKWD) each bind GTP. Residues 354 to 437 (RKISTSVLNK…VPISMRFMQK (84 aa)) form the KH-like domain.

The protein belongs to the TRAFAC class TrmE-Era-EngA-EngB-Septin-like GTPase superfamily. EngA (Der) GTPase family. As to quaternary structure, associates with the 50S ribosomal subunit.

Functionally, GTPase that plays an essential role in the late steps of ribosome biogenesis. This Pelodictyon phaeoclathratiforme (strain DSM 5477 / BU-1) protein is GTPase Der.